We begin with the raw amino-acid sequence, 121 residues long: Small ribosomal subunit protein uS13 (121 aa).

The disordered stretch occupies residues 92-121; sequence RRGLPVRGQNSKNNARTRKGPKRTVANKKK. A compositionally biased stretch (basic residues) spans 106–121; that stretch reads ARTRKGPKRTVANKKK.

The protein belongs to the universal ribosomal protein uS13 family. As to quaternary structure, part of the 30S ribosomal subunit. Forms a loose heterodimer with protein S19. Forms two bridges to the 50S subunit in the 70S ribosome.

Functionally, located at the top of the head of the 30S subunit, it contacts several helices of the 16S rRNA. In the 70S ribosome it contacts the 23S rRNA (bridge B1a) and protein L5 of the 50S subunit (bridge B1b), connecting the 2 subunits; these bridges are implicated in subunit movement. Contacts the tRNAs in the A and P-sites. This Shouchella clausii (strain KSM-K16) (Alkalihalobacillus clausii) protein is Small ribosomal subunit protein uS13.